The primary structure comprises 251 residues: MLQTMKTLTLIPARLGSTRLPNKPLADICGKPMIVHVADRAAAAKLGRTVIATDSEEIFKVVAAHGHEAIMTRGDHESGSDRIYEALAKLDPSGEIDAVVNVQGDLPTIDPDTIRRALLPLEDGPADIATLGVEITVEEEKTNPNVVKIVGSPLAGNRRLRALYFTRATAPYGEGPLYHHIGLYAYRRSALERFVKLGPSPLEKREKLEQLRALEAGMRIDVEIVKTVPLGVDTQADLDRARTFCSQAGTI.

Belongs to the KdsB family.

The protein localises to the cytoplasm. It carries out the reaction 3-deoxy-alpha-D-manno-oct-2-ulosonate + CTP = CMP-3-deoxy-beta-D-manno-octulosonate + diphosphate. It functions in the pathway nucleotide-sugar biosynthesis; CMP-3-deoxy-D-manno-octulosonate biosynthesis; CMP-3-deoxy-D-manno-octulosonate from 3-deoxy-D-manno-octulosonate and CTP: step 1/1. The protein operates within bacterial outer membrane biogenesis; lipopolysaccharide biosynthesis. Activates KDO (a required 8-carbon sugar) for incorporation into bacterial lipopolysaccharide in Gram-negative bacteria. The protein is 3-deoxy-manno-octulosonate cytidylyltransferase of Brucella abortus (strain 2308).